Consider the following 94-residue polypeptide: Small ribosomal subunit protein uS19 (94 aa).

This sequence belongs to the universal ribosomal protein uS19 family.

Functionally, protein S19 forms a complex with S13 that binds strongly to the 16S ribosomal RNA. This Lactobacillus acidophilus (strain ATCC 700396 / NCK56 / N2 / NCFM) protein is Small ribosomal subunit protein uS19 (rpsS).